The following is a 181-amino-acid chain: HGPRTase-like protein 1 (181 aa).

Belongs to the purine/pyrimidine phosphoribosyltransferase family. Archaeal HPRT subfamily.

Functionally, may catalyze a purine salvage reaction, the substrate is unknown. The sequence is that of HGPRTase-like protein 1 from Halalkalicoccus jeotgali (strain DSM 18796 / CECT 7217 / JCM 14584 / KCTC 4019 / B3).